A 126-amino-acid polypeptide reads, in one-letter code: Large ribosomal subunit protein bL12 (126 aa).

Belongs to the bacterial ribosomal protein bL12 family. Homodimer. Part of the ribosomal stalk of the 50S ribosomal subunit. Forms a multimeric L10(L12)X complex, where L10 forms an elongated spine to which 2 to 4 L12 dimers bind in a sequential fashion. Binds GTP-bound translation factors.

In terms of biological role, forms part of the ribosomal stalk which helps the ribosome interact with GTP-bound translation factors. Is thus essential for accurate translation. The polypeptide is Large ribosomal subunit protein bL12 (Elusimicrobium minutum (strain Pei191)).